Reading from the N-terminus, the 511-residue chain is MSAKSTARFTPAGQLTAEDLGAIHLIGVGGVGMSGLARLFLTRGISVSGSELREWPSLAGLRALGGTIYMSHEVANLDGVDTVVYSSAIPQDHLELVEARRRGLRVLHRSEALAAAMTGRRTVAVAGTHGKTTTTSMVTMVLQQAGVDPSFVIGGEISEVGSGAHHGTGEYFVVEADESDRSFLIYRPFVSIITNIEADHLNTYGDLANLEAAFADFARLTDPDGFVVTCADDAGSRRLAETLRAEGRRVYTYGTSTDADLRLTEMASSTRGIRYLAEVDGRSLGEFRLPVPGRHMGLNSASAVLAAYLLGLPLDAAEAALAAFPGVRRRFERKGVADNVLVYDEYAYHPTPIALALRTLREVAGDGRLIVVFQPYRLYRTRDLQTEIAEALAIADELVLLEVFGPGELREPGEGSAALIEAVPLPADRKVFVDSWEAAPVEVARRARPGDVVVTMGAPPSSLMGEQLLDALSARRAGSPVGTVPGGEVGGATTIGGTVPGGSAPGASAAG.

ATP is bound at residue 127–133 (GTHGKTT). The disordered stretch occupies residues 481-511 (VGTVPGGEVGGATTIGGTVPGGSAPGASAAG). Residues 484 to 504 (VPGGEVGGATTIGGTVPGGSA) are compositionally biased toward gly residues.

Belongs to the MurCDEF family.

The protein localises to the cytoplasm. The catalysed reaction is UDP-N-acetyl-alpha-D-muramate + L-alanine + ATP = UDP-N-acetyl-alpha-D-muramoyl-L-alanine + ADP + phosphate + H(+). It participates in cell wall biogenesis; peptidoglycan biosynthesis. Its function is as follows. Cell wall formation. This chain is UDP-N-acetylmuramate--L-alanine ligase, found in Salinispora arenicola (strain CNS-205).